A 208-amino-acid polypeptide reads, in one-letter code: DNA-binding protein HupB (208 aa).

Residues 1–90 form a bacterial histone-like domain region; the sequence is MNKAELIDVL…PGAQFKAVIS (90 aa). Lys-3 carries the post-translational modification N6-acetyllysine. N6-acetyllysine; alternate; partial is present on Lys-3. Residue Lys-3 is modified to N6-methyllysine; alternate; partial. N6-acetyllysine; partial is present on Lys-72. Position 86 is an N6-methyllysine; partial (Lys-86). The tract at residues 92–208 is C-terminus, required for nucleoid localization; the sequence is AQKLPADGPA…KKAPAKKGRR (117 aa). Lys-94 and Lys-103 each carry N6-acetyllysine; alternate; partial. 2 positions are modified to N6-methyllysine; alternate; partial: Lys-94 and Lys-103. The interval 96 to 208 is disordered; sequence PADGPAVKRG…KKAPAKKGRR (113 aa). The interval 101–205 is degenerate repeats region; sequence AVKRGVTAGP…AAAKKAPAKK (105 aa). Residues 113–208 are compositionally biased toward basic residues; that stretch reads KAAKKAPAKK…KKAPAKKGRR (96 aa). 4 positions are modified to N6-acetyllysine: Lys-116, Lys-136, Lys-149, and Lys-168.

Belongs to the bacterial histone-like protein family. Long actinobacterial subfamily. May form oligomers. Interacts with RNase E (rne). In terms of processing, in addition to the identifed modifications, is also methylated on one of Arg-53; Arg-54 or Arg-55.

The protein resides in the cytoplasm. Its subcellular location is the nucleoid. The protein localises to the secreted. It localises to the cell wall. It carries out the reaction 4 Fe(2+) + O2 + 4 H(+) = 4 Fe(3+) + 2 H2O. Trans-stilbene derivative 4,4'-[(E)-ethene-1,2 diylbis({5[(phenylcarbonyl)amino]benzene-2,1-diyl}sulfonylimino)] dibenzoic acid (SD1) inhibits DNA binding at 50 uM. SD1 does not inhibit growth in a range of 3-1600 uM. In terms of biological role, a nucleoid-associated protein (NAP) that plays a crucial role in local chromosome architecture. Helps organize newly replicated oriC proximal regions and contributes to the timing of replication initiation and coordinating replication with chromosome segregation. There are between 30,000-60,000 molecules in a log phase cell; the protein-DNA complex is dynamic during the cell cycle, with more complexes near the cell ends. Binds irregularly along the chromosome with higher binding near the origin of replication (oriC) and lowest binding near the chromosome terminus (ter). Binds DNA non-sequence specifically via both its N- and C-terminal domains with high affinity, has no preference for linear or supercoiled DNA. Binds four-way junction DNA. Represses T7 RNA polymerase in vitro. The C-terminal domain enhances DNA end-joining in vitro in the presence of T4 DNA ligase. RNase E and HupB jointly contribute to cellular adaptation to changing growth conditions and survival during antibiotic treatment. Has ferroxidase activity, converts Fe(2+) into Fe(3+). Binds Fe(3+) but not Fe(2+); prevents the generation of hydroxyl radicals by the Fenton reaction and thus protects DNA from damage. May function in iron storage. Functionally, plays a role in epigenetic resistance to antibiotics. Growth on levels of isoniazid (INH) near the minimal inhibitory concentration (MIC) kills most bacteria. The surviving cells grow as either large or small colony variants (SCV), evidence suggest SCVs are associated with persistent infections. Mutating this protein leads to specific loss of SCVs. Its function is as follows. May play a role in cell wall assembly. The protein is DNA-binding protein HupB of Mycolicibacterium smegmatis (strain ATCC 700084 / mc(2)155) (Mycobacterium smegmatis).